Consider the following 264-residue polypeptide: uncharacterized protein (264 aa).

13–20 (TGSTSGIG) contributes to the NADP(+) binding site. Ser-141 contributes to the substrate binding site. Tyr-154 functions as the Proton acceptor in the catalytic mechanism.

This sequence belongs to the short-chain dehydrogenases/reductases (SDR) family.

This is an uncharacterized protein from Bacillus subtilis (strain 168).